Here is a 320-residue protein sequence, read N- to C-terminus: Homoserine kinase (320 aa).

Residue Pro-100–Ala-110 coordinates ATP.

It belongs to the GHMP kinase family. Homoserine kinase subfamily.

The protein localises to the cytoplasm. The enzyme catalyses L-homoserine + ATP = O-phospho-L-homoserine + ADP + H(+). It participates in amino-acid biosynthesis; L-threonine biosynthesis; L-threonine from L-aspartate: step 4/5. In terms of biological role, catalyzes the ATP-dependent phosphorylation of L-homoserine to L-homoserine phosphate. The polypeptide is Homoserine kinase (Chlorobium phaeobacteroides (strain BS1)).